The sequence spans 426 residues: MDRLHIIGGSPLSGRIPVSGAKNSALKLMVACLLTDQPIEFTNMPNLADTRFLAQLLETLGVEVYWPRGSSTCHLNAAELKSTIAPYEQVRKMRASFNVLGPLVARSGHATVSLPGGCAIGARPVDLHLQALEAMGADLRVEQGYVKAAAIHGLKGAHINFSTVSVGATEHTMLAATLAKGETILENAAREPEIEDLAHCLNQMGAQITGAGTPIIRIKGVEALKGTTYSVMPDRIEAGTFAMAAAAAGGDVTLDGAPVAALGAMIAKLREAGVTVDADEAASTIRIRRNGTPLKAVSLSTQPHPGFPTDLQAQFMALMTLASGTSIIRETIFENRFMHAPELARLGADITVRGQEAVVKGVAQLTAAPVMATDLRASVSLVIAGLAAQGETVVNRIYHLDRGFERLEEKLGACGARIERRSGEEE.

22-23 (KN) is a phosphoenolpyruvate binding site. A UDP-N-acetyl-alpha-D-glucosamine-binding site is contributed by Arg-94. Cys-118 acts as the Proton donor in catalysis. Cys-118 is subject to 2-(S-cysteinyl)pyruvic acid O-phosphothioketal. Residues 123-127 (RPVDL), Asp-310, and Ile-332 each bind UDP-N-acetyl-alpha-D-glucosamine.

The protein belongs to the EPSP synthase family. MurA subfamily.

It is found in the cytoplasm. The enzyme catalyses phosphoenolpyruvate + UDP-N-acetyl-alpha-D-glucosamine = UDP-N-acetyl-3-O-(1-carboxyvinyl)-alpha-D-glucosamine + phosphate. Its pathway is cell wall biogenesis; peptidoglycan biosynthesis. Functionally, cell wall formation. Adds enolpyruvyl to UDP-N-acetylglucosamine. In Hyphomonas neptunium (strain ATCC 15444), this protein is UDP-N-acetylglucosamine 1-carboxyvinyltransferase.